Consider the following 311-residue polypeptide: 4-hydroxy-tetrahydrodipicolinate synthase (311 aa).

T51 lines the pyruvate pocket. Y140 (proton donor/acceptor) is an active-site residue. Residue K168 is the Schiff-base intermediate with substrate of the active site. Position 209 (I209) interacts with pyruvate.

This sequence belongs to the DapA family. Homotetramer; dimer of dimers.

It is found in the cytoplasm. The catalysed reaction is L-aspartate 4-semialdehyde + pyruvate = (2S,4S)-4-hydroxy-2,3,4,5-tetrahydrodipicolinate + H2O + H(+). The protein operates within amino-acid biosynthesis; L-lysine biosynthesis via DAP pathway; (S)-tetrahydrodipicolinate from L-aspartate: step 3/4. Its function is as follows. Catalyzes the condensation of (S)-aspartate-beta-semialdehyde [(S)-ASA] and pyruvate to 4-hydroxy-tetrahydrodipicolinate (HTPA). This is 4-hydroxy-tetrahydrodipicolinate synthase from Streptococcus pneumoniae (strain Taiwan19F-14).